The primary structure comprises 139 residues: Nucleoside diphosphate kinase (139 aa).

Lys-10, Phe-58, Arg-86, Thr-92, Arg-104, and Asn-114 together coordinate ATP. His-117 serves as the catalytic Pros-phosphohistidine intermediate.

The protein belongs to the NDK family. In terms of assembly, homotetramer. The cofactor is Mg(2+).

It is found in the cytoplasm. It catalyses the reaction a 2'-deoxyribonucleoside 5'-diphosphate + ATP = a 2'-deoxyribonucleoside 5'-triphosphate + ADP. The enzyme catalyses a ribonucleoside 5'-diphosphate + ATP = a ribonucleoside 5'-triphosphate + ADP. Its function is as follows. Major role in the synthesis of nucleoside triphosphates other than ATP. The ATP gamma phosphate is transferred to the NDP beta phosphate via a ping-pong mechanism, using a phosphorylated active-site intermediate. This is Nucleoside diphosphate kinase from Rhodococcus opacus (strain B4).